The primary structure comprises 377 residues: MAAACTRTLGKVGRLVLDTPTCRFTNTAAFVPRTSMRCQGRAYGTGSSGFKSRLLLAAPVRGSGRVLGCAFLLGGGFGLYQTIKLTLQHHLAEKESDASDLDTDLKLTLYQYKTCPFCSKVRAFLDYHRLPYEIVEVNPVMRQEIKWSTYRKVPILMVNGTVQLNDSSVIISALKTYISSKDKKISEILACYPEMKSKNDRGKDVIEFGNKYWVMVHDADADQLYPGKDSRKEEIKWRTWADDWLVHLISPNVYRTPTEALASFDYIVREGKFGSFEGFFAKYFGAAAMWIISKRLKYKHNLQADVRQDLYKAVNDWVAAIGKNKQFMGGDEPNLADLAVFGVLRVMEGLQSFDDMMEHTKVKKWYSRMQKATQHVS.

The Lumenal portion of the chain corresponds to 1-65 (MAAACTRTLG…LAAPVRGSGR (65 aa)). The helical transmembrane segment at 66-83 (VLGCAFLLGGGFGLYQTI) threads the bilayer. The region spanning 105–182 (LKLTLYQYKT…ALKTYISSKD (78 aa)) is the GST N-terminal domain. Residues Val-153 and 166–167 (DS) each bind glutathione. The region spanning 266-377 (YIVREGKFGS…RMQKATQHVS (112 aa)) is the GST C-terminal domain.

The protein belongs to the GST superfamily. Homodimer.

The protein localises to the golgi apparatus membrane. The catalysed reaction is prostaglandin H2 = prostaglandin E2. It catalyses the reaction prostaglandin H2 = (12S)-hydroxy-(5Z,8E,10E)-heptadecatrienoate + malonaldehyde. The protein operates within lipid metabolism; prostaglandin biosynthesis. Its activity is regulated as follows. Isomerase activity is increased by sulfhydril compounds. Dithiothreitol (DTT) is most effective, followed by glutathione (GSH) and 2-mercaptoethanol. Its function is as follows. Isomerase that catalyzes the conversion of PGH2 into the more stable prostaglandin E2 (PGE2) (in vitro). The biological function and the GSH-dependent property of PTGES2 is still under debate. In vivo, PTGES2 could form a complex with GSH and heme and would not participate in PGE2 synthesis but would catalyze the degradation of prostaglandin E2 H2 (PGH2) to 12(S)-hydroxy-5(Z),8(E),10(E)-heptadecatrienoic acid (HHT) and malondialdehyde (MDA). The protein is Prostaglandin E synthase 2 (ptges2) of Danio rerio (Zebrafish).